The chain runs to 176 residues: NAD(P)H-quinone oxidoreductase subunit 6, chloroplastic (176 aa).

5 helical membrane passes run 10-30 (ILLV…VLFT), 32-52 (PIFS…FHIL), 61-81 (AQLL…VMFM), 92-112 (LWTV…FSLI), and 152-172 (FYLP…GAIA).

It belongs to the complex I subunit 6 family. As to quaternary structure, NDH is composed of at least 16 different subunits, 5 of which are encoded in the nucleus.

The protein localises to the plastid. It is found in the chloroplast thylakoid membrane. The catalysed reaction is a plastoquinone + NADH + (n+1) H(+)(in) = a plastoquinol + NAD(+) + n H(+)(out). The enzyme catalyses a plastoquinone + NADPH + (n+1) H(+)(in) = a plastoquinol + NADP(+) + n H(+)(out). NDH shuttles electrons from NAD(P)H:plastoquinone, via FMN and iron-sulfur (Fe-S) centers, to quinones in the photosynthetic chain and possibly in a chloroplast respiratory chain. The immediate electron acceptor for the enzyme in this species is believed to be plastoquinone. Couples the redox reaction to proton translocation, and thus conserves the redox energy in a proton gradient. The chain is NAD(P)H-quinone oxidoreductase subunit 6, chloroplastic (ndhG) from Drimys granadensis.